The primary structure comprises 414 residues: Ciliary microtubule-associated protein 2 (414 aa).

The chain is Ciliary microtubule-associated protein 2 (Cimap2) from Mus musculus (Mouse).